Reading from the N-terminus, the 437-residue chain is Proton/glutamate-aspartate symporter (437 aa).

The Cytoplasmic segment spans residues 1-5; it reads MKNIK. A helical membrane pass occupies residues 6–26; that stretch reads FSLAWQILFAMVLGILLGSYL. The Periplasmic portion of the chain corresponds to 27–50; that stretch reads HYHSDSRDWLVVNLLSPAGDIFIH. The chain crosses the membrane as a helical span at residues 51-71; the sequence is LIKMIVVPIVISTLVVGIAGV. At 72-84 the chain is on the cytoplasmic side; it reads GDAKQLGRIGAKT. Residues 85–105 traverse the membrane as a helical segment; the sequence is IIYFEVITTVAIILGITLANV. At 106 to 159 the chain is on the periplasmic side; sequence FQPGAGVDMSQLATVDISKYQSTTEAVQSSSHGIMGTILSLVPTNIVASMAKGE. A helical transmembrane segment spans residues 160–180; it reads MLPIIFFSVLFGLGLSSLPAT. The Cytoplasmic segment spans residues 181–210; sequence HREPLVTVFRSISETMFKVTHMVMRYAPVG. A helical membrane pass occupies residues 211 to 231; that stretch reads VFALIAVTVANFGFSSLWPLA. Position 232 (Lys232) is a topological domain, periplasmic. A helical membrane pass occupies residues 233-253; that stretch reads LVLLVHFAILFFALVVLGIVA. At 254–292 the chain is on the cytoplasmic side; the sequence is RLCGLSVWILIRILKDELILAYSTASSESVLPRIIEKME. The helical transmembrane segment at 293 to 313 threads the bilayer; sequence AYGAPVSITSFVVPTGYSFNL. Over 314–324 the chain is Periplasmic; the sequence is DGSTLYQSIAA. Residues 325-345 form a helical membrane-spanning segment; that stretch reads IFIAQLYGIDLSIWQEIILVL. Topologically, residues 346 to 361 are cytoplasmic; it reads TLMVTSKGIAGVPGVS. A helical transmembrane segment spans residues 362–382; sequence FVVLLATLGSVGIPLEGLAFI. The Periplasmic portion of the chain corresponds to 383-387; sequence AGVDR. A helical transmembrane segment spans residues 388–408; that stretch reads ILDMARTALNVVGNALAVLVI. Over 409–437 the chain is Cytoplasmic; it reads AKWEHKFDRKKALAYEREVLGKFDKTADQ.

Belongs to the dicarboxylate/amino acid:cation symporter (DAACS) (TC 2.A.23) family. GltP subfamily.

Its subcellular location is the cell inner membrane. Glutamate uptake is inhibited by L-cysteate and beta-hydroxyaspartate. Inhibited by the uncoupler carbonylcyanide m-chlorophenylhydrazone (CCCP). In terms of biological role, catalyzes the proton-dependent, binding-protein-independent transport of glutamate and aspartate. In Escherichia coli (strain K12), this protein is Proton/glutamate-aspartate symporter.